A 433-amino-acid polypeptide reads, in one-letter code: MRVLVLGSGVIGTTSAYYLARAGFQVTVVDRQPAAAMETSFANAGQVSPGYASPWAAPGVPLKALKWLLQRHAPLAIKATADIDQYLWMAQMLRNCTASRYAINKERMVRLSEYSRDCLDELRLETGIAYEGRSLGTTQLFRTQAQLDNAAKDIAVLEQSGVPYELLDRDGIARVEPALAGVTGILSGALRLPNDQTGDCQLFTTRLAEMAVALGVEFRYGQNIERLDHAGDRINGVWIDGKLETADRYVLALGSYSPQLLKPLGIKAPVYPLKGYSLTVPITNPDMAPTSTILDETYKVAITRFDNRIRVGGMAEIAGFDLSLNPRRRETLEMIVGDLYPQGGDLTQADFWTGLRPTTPDGTPIVGATPFRNLFLNTGHGTLGWTMACGSGRLLADLIARKTPRISAEGLDISRYGNTQENAQHVHPAPAHQ.

FAD is bound at residue 3-17 (VLVLGSGVIGTTSAY).

Belongs to the DadA oxidoreductase family. FAD serves as cofactor.

The catalysed reaction is a D-alpha-amino acid + A + H2O = a 2-oxocarboxylate + AH2 + NH4(+). The protein operates within amino-acid degradation; D-alanine degradation; NH(3) and pyruvate from D-alanine: step 1/1. Oxidative deamination of D-amino acids. This chain is D-amino acid dehydrogenase, found in Pseudomonas syringae pv. syringae (strain B728a).